A 122-amino-acid chain; its full sequence is Protein POLR1D, isoform 2 (122 aa).

Met1 carries the N-acetylmethionine modification. The interval 48–122 is disordered; it reads INTIKNTLPS…DKYEKRSNRR (75 aa). Residues 57-83 show a composition bias toward basic and acidic residues; that stretch reads SHKEQDHEQKEGDKEPAKSQAQKEENP. Over residues 84-96 the composition is skewed to basic residues; that stretch reads KKHRSHPYKHSFR. At Ser104 the chain carries Phosphoserine. Over residues 110–122 the composition is skewed to basic and acidic residues; that stretch reads SSQDKYEKRSNRR.

This Homo sapiens (Human) protein is Protein POLR1D, isoform 2 (POLR1D).